A 195-amino-acid chain; its full sequence is Mannitol operon repressor (195 aa).

It belongs to the MtlR/FumE family. As to quaternary structure, homodimer. Can also form higher level multimer aggregates.

Functionally, involved in the repression of the expression of the mannitol mtlADR operon. Does not bind the operator/promoter regulatory region of this operon. Therefore, seems to belong to a new class of transcription factors in bacteria that may regulate gene expression indirectly, perhaps as a part of a larger transcriptional complex. This is Mannitol operon repressor from Escherichia coli O6:H1 (strain CFT073 / ATCC 700928 / UPEC).